The primary structure comprises 236 residues: 2-C-methyl-D-erythritol 4-phosphate cytidylyltransferase (236 aa).

It belongs to the IspD/TarI cytidylyltransferase family. IspD subfamily. As to quaternary structure, homodimer.

It carries out the reaction 2-C-methyl-D-erythritol 4-phosphate + CTP + H(+) = 4-CDP-2-C-methyl-D-erythritol + diphosphate. The protein operates within isoprenoid biosynthesis; isopentenyl diphosphate biosynthesis via DXP pathway; isopentenyl diphosphate from 1-deoxy-D-xylulose 5-phosphate: step 2/6. In terms of biological role, catalyzes the formation of 4-diphosphocytidyl-2-C-methyl-D-erythritol from CTP and 2-C-methyl-D-erythritol 4-phosphate (MEP). The polypeptide is 2-C-methyl-D-erythritol 4-phosphate cytidylyltransferase (Escherichia coli O139:H28 (strain E24377A / ETEC)).